Reading from the N-terminus, the 509-residue chain is MTKYVYSKDQSYQKFNVDDELNIRRKKLSKLREKGVAFPNNFRRNSISNQLHKKYAHTSNVELIQLNIEVTIAGRIISQRIMGKASFITIRDAEGCIQLYITSNSLATNLYDENIKQWDLGDILGARGILFRTRTGELSIYCKEIRLLTKSLRPLPDKFHGLNNQETKYRQRYLDLIINENTRKTFKIRSLVISEIRQFMKKNNFMEVETPMMHTIAGGAIAHPFITHHNKLGIDMYLRIAPELYLKKLVIGGFERIFEINRSFRNEGISSYHNPEFTMMEIYMAYADYRDIIILVQNLLRSVTQKILGSNIINYGDYELDFKHPFTQISIKEAILYYLPETRSQNIDDICTAVSIAKSLGIKVKSCWTLHRIHMVIFEEVIEKKIIQPTCVTSYPIEISPLARRNDNNPEFADRFELFIAGREIGNGFSELNDPEDQKERFLKQAYGKKNKINNNNVHIHYDEDYLIALEYGLPPTAGIGIGIDRLIMLLTDSHTIRDVILFPTLRPK.

Mg(2+) contacts are provided by Glu-417 and Glu-424.

This sequence belongs to the class-II aminoacyl-tRNA synthetase family. Homodimer. The cofactor is Mg(2+).

It localises to the cytoplasm. It catalyses the reaction tRNA(Lys) + L-lysine + ATP = L-lysyl-tRNA(Lys) + AMP + diphosphate. In Blochmanniella pennsylvanica (strain BPEN), this protein is Lysine--tRNA ligase.